The chain runs to 388 residues: Succinate--CoA ligase [ADP-forming] subunit beta (388 aa).

The ATP-grasp domain maps to 9–244 (KEILRKYNVP…LDEEDANEIE (236 aa)). ATP-binding positions include Lys-46, 53–55 (GRG), Glu-99, Ala-102, and Glu-107. Mg(2+) is bound by residues Asn-199 and Asp-213. Residues Asn-264 and 321–323 (GIM) contribute to the substrate site.

It belongs to the succinate/malate CoA ligase beta subunit family. As to quaternary structure, heterotetramer of two alpha and two beta subunits. It depends on Mg(2+) as a cofactor.

The enzyme catalyses succinate + ATP + CoA = succinyl-CoA + ADP + phosphate. It catalyses the reaction GTP + succinate + CoA = succinyl-CoA + GDP + phosphate. It participates in carbohydrate metabolism; tricarboxylic acid cycle; succinate from succinyl-CoA (ligase route): step 1/1. In terms of biological role, succinyl-CoA synthetase functions in the citric acid cycle (TCA), coupling the hydrolysis of succinyl-CoA to the synthesis of either ATP or GTP and thus represents the only step of substrate-level phosphorylation in the TCA. The beta subunit provides nucleotide specificity of the enzyme and binds the substrate succinate, while the binding sites for coenzyme A and phosphate are found in the alpha subunit. The chain is Succinate--CoA ligase [ADP-forming] subunit beta from Cupriavidus necator (strain ATCC 17699 / DSM 428 / KCTC 22496 / NCIMB 10442 / H16 / Stanier 337) (Ralstonia eutropha).